Here is a 258-residue protein sequence, read N- to C-terminus: MYQEERLVAILDFLKQHNRITTEQICTLLQVSRDTARRDLVKLEEQNAIIRTRGGAILPTVHQKIQSYSGRLKTVSEEKNKIGRLAASLIHDGDRVILDASTTVQACAKHLNAVDCTVITNSINLADVLSDKEGIEIYLLGGKLEKEHRFLYGSSVIEKLSSYHVDKALIGVVGISEHGITIAHEEDGMVKRKMIQQAKQVIALADHSKLGSTSFYQYAELNEIDLLITDRLPNQAFCDLLDRNGVELLVTEQDEGKD.

An HTH deoR-type domain is found at 3 to 58 (QEERLVAILDFLKQHNRITTEQICTLLQVSRDTARRDLVKLEEQNAIIRTRGGAIL). Residues 20–39 (ITTEQICTLLQVSRDTARRD) constitute a DNA-binding region (H-T-H motif).

Plays a role in carbon catabolite repression (CCR). Specifically required for transcriptional repression of the levanase operon by glucose but not by other sugars. In Bacillus subtilis (strain 168), this protein is HTH-type transcriptional repressor GlcR (glcR).